A 752-amino-acid chain; its full sequence is MAP/microtubule affinity-regulating kinase 4 (752 aa).

The segment at M1–R36 is disordered. A Protein kinase domain is found at Y59–I310. ATP-binding positions include I65–V73 and K88. D181 functions as the Proton acceptor in the catalytic mechanism. Position 214 is a phosphothreonine; by LKB1 (T214). The UBA domain occupies E324–G368. The interval A385–L615 is disordered. Residues S391–N406 show a composition bias toward low complexity. Phosphoserine is present on residues S423 and S543. The segment covering P544–S553 has biased composition (low complexity). In terms of domain architecture, KA1 spans A703–L752.

This sequence belongs to the protein kinase superfamily. CAMK Ser/Thr protein kinase family. SNF1 subfamily. In terms of assembly, interacts with MAPT/TAU. Interacts with gamma-tubulin. Interacts with ODF2. Interacts with USP9X. Interacts with YWHAQ. Interacts with NLRP3; promoting NLRP3 recruitment to microtubule organizing center (MTOC). It depends on Mg(2+) as a cofactor. Post-translationally, ubiquitinated with 'Lys-29'- and 'Lys-33'-linked polyubiquitins which appear to impede LKB1-mediated phosphorylation. Deubiquitinated by USP9X. Phosphorylated at Thr-214 by STK11/LKB1 in complex with STE20-related adapter-alpha (STRADA) pseudo kinase and CAB39. Phosphorylated throughout the cell cycle. In terms of tissue distribution, isoform 1 and isoform 2 show similar expression patterns in the central nervous system and are present in the same subsets of neurons including pyramidal and non-pyramidal neurons in the cerebral cortex and hippocampus, cerebellar Purkinje cells, and interneurons and motor neurons in the spinal cord but not in glial cells (at protein level). Isoform 2 is the major isoform in brain and cerebellum. Also expressed in spleen, liver, small intestine, colon, kidney, tongue, testis and lung. Isoform 1 and isoform 2 are expressed at similar levels in heart.

The protein resides in the cytoplasm. It localises to the cytoskeleton. The protein localises to the microtubule organizing center. It is found in the centrosome. Its subcellular location is the cilium axoneme. The protein resides in the cilium basal body. It localises to the cell projection. The protein localises to the dendrite. The enzyme catalyses L-seryl-[protein] + ATP = O-phospho-L-seryl-[protein] + ADP + H(+). The catalysed reaction is L-threonyl-[protein] + ATP = O-phospho-L-threonyl-[protein] + ADP + H(+). With respect to regulation, activated by phosphorylation on Thr-214. Its function is as follows. Serine/threonine-protein kinase. Phosphorylates the microtubule-associated protein MAPT/TAU. Also phosphorylates the microtubule-associated proteins MAP2 and MAP4. Involved in regulation of the microtubule network, causing reorganization of microtubules into bundles. Required for the initiation of axoneme extension during cilium assembly. Regulates the centrosomal location of ODF2 and phosphorylates ODF2 in vitro. Plays a role in cell cycle progression, specifically in the G1/S checkpoint. Reduces neuronal cell survival. Plays a role in energy homeostasis by regulating satiety and metabolic rate. Promotes adipogenesis by activating JNK1 and inhibiting the p38MAPK pathway, and triggers apoptosis by activating the JNK1 pathway. Phosphorylates mTORC1 complex member RPTOR and acts as a negative regulator of the mTORC1 complex, probably due to disruption of the interaction between phosphorylated RPTOR and the RRAGA/RRAGC heterodimer which is required for mTORC1 activation. Involved in NLRP3 positioning along microtubules by mediating NLRP3 recruitment to microtubule organizing center (MTOC) upon inflammasome activation. The chain is MAP/microtubule affinity-regulating kinase 4 from Mus musculus (Mouse).